Here is a 604-residue protein sequence, read N- to C-terminus: Elongation factor 4 (604 aa).

A tr-type G domain is found at 7–190; that stretch reads SRLRNFCIIA…IVDRVPAPPD (184 aa). GTP-binding positions include 19–24 and 136–139; these read DHGKST and NKID.

This sequence belongs to the TRAFAC class translation factor GTPase superfamily. Classic translation factor GTPase family. LepA subfamily.

It localises to the cell inner membrane. It catalyses the reaction GTP + H2O = GDP + phosphate + H(+). Required for accurate and efficient protein synthesis under certain stress conditions. May act as a fidelity factor of the translation reaction, by catalyzing a one-codon backward translocation of tRNAs on improperly translocated ribosomes. Back-translocation proceeds from a post-translocation (POST) complex to a pre-translocation (PRE) complex, thus giving elongation factor G a second chance to translocate the tRNAs correctly. Binds to ribosomes in a GTP-dependent manner. The chain is Elongation factor 4 from Synechococcus sp. (strain RCC307).